A 398-amino-acid polypeptide reads, in one-letter code: 4-hydroxy-3-methylbut-2-enyl diphosphate reductase (398 aa).

[4Fe-4S] cluster is bound at residue Cys-66. A (2E)-4-hydroxy-3-methylbut-2-enyl diphosphate-binding site is contributed by His-96. His-96 contributes to the dimethylallyl diphosphate binding site. His-96 serves as a coordination point for isopentenyl diphosphate. Cys-157 provides a ligand contact to [4Fe-4S] cluster. (2E)-4-hydroxy-3-methylbut-2-enyl diphosphate is bound at residue His-185. Dimethylallyl diphosphate is bound at residue His-185. An isopentenyl diphosphate-binding site is contributed by His-185. Glu-187 serves as the catalytic Proton donor. Residue Thr-250 coordinates (2E)-4-hydroxy-3-methylbut-2-enyl diphosphate. A [4Fe-4S] cluster-binding site is contributed by Cys-288. 4 residues coordinate (2E)-4-hydroxy-3-methylbut-2-enyl diphosphate: Ser-317, Ser-318, Asn-319, and Ser-379. Dimethylallyl diphosphate is bound by residues Ser-317, Ser-318, Asn-319, and Ser-379. Isopentenyl diphosphate-binding residues include Ser-317, Ser-318, Asn-319, and Ser-379.

Belongs to the IspH family. Requires [4Fe-4S] cluster as cofactor.

It catalyses the reaction isopentenyl diphosphate + 2 oxidized [2Fe-2S]-[ferredoxin] + H2O = (2E)-4-hydroxy-3-methylbut-2-enyl diphosphate + 2 reduced [2Fe-2S]-[ferredoxin] + 2 H(+). It carries out the reaction dimethylallyl diphosphate + 2 oxidized [2Fe-2S]-[ferredoxin] + H2O = (2E)-4-hydroxy-3-methylbut-2-enyl diphosphate + 2 reduced [2Fe-2S]-[ferredoxin] + 2 H(+). It functions in the pathway isoprenoid biosynthesis; dimethylallyl diphosphate biosynthesis; dimethylallyl diphosphate from (2E)-4-hydroxy-3-methylbutenyl diphosphate: step 1/1. Its pathway is isoprenoid biosynthesis; isopentenyl diphosphate biosynthesis via DXP pathway; isopentenyl diphosphate from 1-deoxy-D-xylulose 5-phosphate: step 6/6. Its function is as follows. Catalyzes the conversion of 1-hydroxy-2-methyl-2-(E)-butenyl 4-diphosphate (HMBPP) into a mixture of isopentenyl diphosphate (IPP) and dimethylallyl diphosphate (DMAPP). Acts in the terminal step of the DOXP/MEP pathway for isoprenoid precursor biosynthesis. The chain is 4-hydroxy-3-methylbut-2-enyl diphosphate reductase from Synechococcus sp. (strain CC9311).